A 207-amino-acid chain; its full sequence is Carbonic anhydrase 2 (207 aa).

The Zn(2+) site is built by Cys51, Asp53, His104, and Cys107.

It belongs to the beta-class carbonic anhydrase family. The cofactor is Zn(2+).

It catalyses the reaction hydrogencarbonate + H(+) = CO2 + H2O. Catalyzes the reversible hydration of carbon dioxide to form bicarbonate. This Mycobacterium tuberculosis (strain CDC 1551 / Oshkosh) protein is Carbonic anhydrase 2 (mtcA2).